The chain runs to 339 residues: Putative NADP-dependent oxidoreductase YfmJ (339 aa).

Residues 156–159 (GAVG), K182, Y198, N222, 244–250 (CGAISSY), 277–279 (FIV), and N327 each bind NADP(+).

It belongs to the NADP-dependent oxidoreductase L4BD family.

Its function is as follows. Putative quinone oxidoreductase that may contribute to the degradation of aromatic compounds. This chain is Putative NADP-dependent oxidoreductase YfmJ (yfmJ), found in Bacillus subtilis (strain 168).